Consider the following 283-residue polypeptide: Pyridoxal kinase PdxY (283 aa).

Serine 8 provides a ligand contact to substrate. Residues aspartate 110 and glutamate 147 each coordinate ATP. Residue aspartate 219 coordinates substrate.

Belongs to the pyridoxine kinase family. PdxY subfamily. Homodimer. Mg(2+) is required as a cofactor.

The enzyme catalyses pyridoxal + ATP = pyridoxal 5'-phosphate + ADP + H(+). It functions in the pathway cofactor metabolism; pyridoxal 5'-phosphate salvage; pyridoxal 5'-phosphate from pyridoxal: step 1/1. Pyridoxal kinase involved in the salvage pathway of pyridoxal 5'-phosphate (PLP). Catalyzes the phosphorylation of pyridoxal to PLP. This chain is Pyridoxal kinase PdxY, found in Leifsonia xyli subsp. xyli (strain CTCB07).